Consider the following 1405-residue polypeptide: Rho guanine nucleotide exchange factor 18 (1405 aa).

Disordered stretches follow at residues 1-47 (MGSE…EDGF), 92-115 (ETHRQEARRESSHTSCEGASALPQ), and 289-330 (PGKS…PGKR). Composition is skewed to basic and acidic residues over residues 92 to 103 (ETHRQEARRESS) and 308 to 330 (RQKEKGKSPAHLKDKTQDLPGKR). A C2H2-type; degenerate zinc finger spans residues 347–372 (SSCPLCGEPLLNSASLKEHPRTTLLS). One can recognise a DH domain in the interval 485 to 682 (KRQDVLYELM…KDIISQVDAK (198 aa)). Residues 723-825 (QLHLEGALCW…WMAHIRRAVE (103 aa)) enclose the PH domain. Positions 936–1016 (QVEEGSVSAG…PQAVEMPSTE (81 aa)) are disordered. Thr952 is subject to Phosphothreonine. Ser961 carries the post-translational modification Phosphoserine. Positions 1084-1181 (FEKQREERAG…RERLELLRRF (98 aa)) form a coiled coil. 3 disordered regions span residues 1198–1242 (EAQP…VERP), 1274–1309 (RQTAVQQQIPTKLAASTKGGKEKGSKSRGSQRWESS), and 1328–1405 (ESAS…VIFF). A phosphoserine mark is found at Ser1336 and Ser1338. Pro residues predominate over residues 1355 to 1365 (FPAPSPAPAAT). Residues 1375-1394 (TSLPPVSPASSLPTTPLATT) show a composition bias toward low complexity. Residues 1396 to 1405 (EVSKEDVIFF) are compositionally biased toward basic and acidic residues.

As to quaternary structure, interacts with SEPT9; interaction may inhibit GEF activity. Interacts with Gbetagamma subunits GNB1 and GNG2. Interacts with EPB41L4B. Interacts with PATJ (via C-terminus).

It is found in the cytoplasm. It localises to the cytoskeleton. The protein resides in the cell membrane. The protein localises to the apical cell membrane. Functionally, acts as a guanine nucleotide exchange factor (GEF) for RhoA GTPases. May play a role in actin cytoskeleton reorganization in different tissues since its activation induces formation of actin stress fibers. Also acts as a GEF for RAC1, inducing production of reactive oxygen species (ROS). Does not act as a GEF for CDC42. The G protein beta-gamma (Gbetagamma) subunits of heterotrimeric G proteins act as activators, explaining the integrated effects of LPA and other G-protein coupled receptor agonists on actin stress fiber formation, cell shape change and ROS production. Required for EPB41L4B-mediated regulation of the circumferential actomyosin belt in epithelial cells. The protein is Rho guanine nucleotide exchange factor 18 (Arhgef18) of Mus musculus (Mouse).